The chain runs to 160 residues: 6,7-dimethyl-8-ribityllumazine synthase (160 aa).

Residues Trp-26, 58–60, and 80–82 each bind 5-amino-6-(D-ribitylamino)uracil; these read AIE and VVI. (2S)-2-hydroxy-3-oxobutyl phosphate is bound at residue 85–86; the sequence is ET. His-88 (proton donor) is an active-site residue. Asn-113 contacts 5-amino-6-(D-ribitylamino)uracil. Arg-127 is a (2S)-2-hydroxy-3-oxobutyl phosphate binding site.

Belongs to the DMRL synthase family. As to quaternary structure, homopentamer.

It carries out the reaction (2S)-2-hydroxy-3-oxobutyl phosphate + 5-amino-6-(D-ribitylamino)uracil = 6,7-dimethyl-8-(1-D-ribityl)lumazine + phosphate + 2 H2O + H(+). Its pathway is cofactor biosynthesis; riboflavin biosynthesis; riboflavin from 2-hydroxy-3-oxobutyl phosphate and 5-amino-6-(D-ribitylamino)uracil: step 1/2. In terms of biological role, catalyzes the formation of 6,7-dimethyl-8-ribityllumazine by condensation of 5-amino-6-(D-ribitylamino)uracil with 3,4-dihydroxy-2-butanone 4-phosphate. This is the penultimate step in the biosynthesis of riboflavin. This chain is 6,7-dimethyl-8-ribityllumazine synthase, found in Mycobacteroides abscessus (strain ATCC 19977 / DSM 44196 / CCUG 20993 / CIP 104536 / JCM 13569 / NCTC 13031 / TMC 1543 / L948) (Mycobacterium abscessus).